Reading from the N-terminus, the 209-residue chain is Ion-translocating oxidoreductase complex subunit G (209 aa).

The chain crosses the membrane as a helical span at residues 9–29 (GLILAVFACVSTGLVALTYAL). Threonine 175 bears the FMN phosphoryl threonine mark.

Belongs to the RnfG family. As to quaternary structure, the complex is composed of six subunits: RnfA, RnfB, RnfC, RnfD, RnfE and RnfG. It depends on FMN as a cofactor.

The protein localises to the cell inner membrane. In terms of biological role, part of a membrane-bound complex that couples electron transfer with translocation of ions across the membrane. This is Ion-translocating oxidoreductase complex subunit G from Vibrio cholerae serotype O1 (strain ATCC 39315 / El Tor Inaba N16961).